The following is a 946-amino-acid chain: Probable inactive ATP-dependent zinc metalloprotease FTSHI 1, chloroplastic (946 aa).

Residues 1–54 constitute a chloroplast transit peptide; sequence MASIDNVFSLGTRFSIPENPKRSILKHATTSSFSARTQTRWRAPILRRSFTVLC. 3 consecutive transmembrane segments (helical) span residues 289–309, 320–340, and 369–389; these read AVIAAAAVVVGGFLASAVFAV, VVWPIAKPFLKLFVGVFLGVL, and VASSLEMLKPILLVVMTMVLL. ATP is bound at residue 470-477; the sequence is GPPGCGKT.

It in the N-terminal section; belongs to the AAA ATPase family. In the C-terminal section; belongs to the peptidase M41 family. Oligomer.

It localises to the plastid. The protein localises to the chloroplast inner membrane. In terms of biological role, functions in chloroplast biogenesis and chloroplast division. Required for plastid development during embryogenesis. Might be involved in chaperone functions or play a structural role in the thylakoid FtsH complex. In Arabidopsis thaliana (Mouse-ear cress), this protein is Probable inactive ATP-dependent zinc metalloprotease FTSHI 1, chloroplastic.